A 369-amino-acid chain; its full sequence is Chorismate synthase (369 aa).

Residues arginine 48 and arginine 54 each contribute to the NADP(+) site. FMN contacts are provided by residues 125-127, 238-239, glycine 278, 293-297, and arginine 319; these read RSS, NA, and KPTSS.

Belongs to the chorismate synthase family. In terms of assembly, homotetramer. FMNH2 is required as a cofactor.

It carries out the reaction 5-O-(1-carboxyvinyl)-3-phosphoshikimate = chorismate + phosphate. It participates in metabolic intermediate biosynthesis; chorismate biosynthesis; chorismate from D-erythrose 4-phosphate and phosphoenolpyruvate: step 7/7. Its function is as follows. Catalyzes the anti-1,4-elimination of the C-3 phosphate and the C-6 proR hydrogen from 5-enolpyruvylshikimate-3-phosphate (EPSP) to yield chorismate, which is the branch point compound that serves as the starting substrate for the three terminal pathways of aromatic amino acid biosynthesis. This reaction introduces a second double bond into the aromatic ring system. The polypeptide is Chorismate synthase (Burkholderia mallei (strain NCTC 10229)).